The sequence spans 76 residues: Histone acetyltransferase (76 aa).

As to quaternary structure, physically interacts with histone H3 in infected macrophages.

It is found in the secreted. The protein resides in the host cytoplasm. It localises to the host nucleus. It carries out the reaction L-lysyl-[protein] + acetyl-CoA = N(6)-acetyl-L-lysyl-[protein] + CoA + H(+). Its activity is regulated as follows. Is completely inhibited by anacardic acid, an inhibitor of HAT activity. Its function is as follows. Histone acetyltransferase, which by binding to the host chromatin, may manipulate the expression of host genes involved in anti-inflammatory responses to evade clearance and to survive in the intracellular milieu. Acetylates histone H3 at the 'Lys-9' and 'Lys-14' positions. The polypeptide is Histone acetyltransferase (Mycobacterium tuberculosis (strain CDC 1551 / Oshkosh)).